The primary structure comprises 354 residues: MGCTLSTDDKAAQERSKMIDRNLRDDGEKAAREVKLLLLGAGESGKSTIVKQMKIIHEAGYSEEECKQYKAVVYSNTIQSIIAIIRAMGRLKIDFADQARADDARQLFILAGSTEEGFMTGELAGVIQRLWKDGGVQACFSRSREYQLNDSAAYYLNDLDRISHASYVPTQQDVLRTRVKTTGIVETHFTFKDLHFKMFDVGGQRSERKKWIHCFEGVTAIIFCVALSDYDLVLAEDEEMNGMHESMKLFDSICNNKWFTDTSIILFLNKKDLFEEKIKKSLLTICFPEYAGSNTYEEAAAYVQCQFEDLNKRKDTKEIYTHFTCATDTKNVQFVFDAVTDVIIKNNLKDCGLF.

Residue glycine 2 is the site of N-myristoyl glycine attachment. Residue cysteine 3 is the site of S-palmitoyl cysteine attachment. The G-alpha domain occupies 32-354; that stretch reads REVKLLLLGA…KNNLKDCGLF (323 aa). A G1 motif region spans residues 35–48; sequence KLLLLGAGESGKST. GTP is bound by residues 43-48, 150-151, and 175-178; these read ESGKST, DS, and LRTR. Serine 47 provides a ligand contact to Mg(2+). A G2 motif region spans residues 173 to 181; sequence DVLRTRVKT. Threonine 181 is a Mg(2+) binding site. Residues 196 to 205 are G3 motif; it reads FKMFDVGGQR. Residues 200-204, 269-272, and alanine 326 contribute to the GTP site; these read DVGGQ and NKKD. Positions 265–272 are G4 motif; the sequence is ILFLNKKD. The G5 motif stretch occupies residues 324-329; that stretch reads TCATDT.

Belongs to the G-alpha family. G(i/o/t/z) subfamily. Heterotrimeric G proteins are composed of 3 units; alpha, beta and gamma. The alpha chain contains the guanine nucleotide binding site. Part of a spindle orientation complex. Identified in complex with the beta subunit GNB1 and the gamma subunit GNG1. Identified in complex with the beta subunit GNB1 and the gamma subunit GNG2. GTP binding causes dissociation of the heterotrimer, liberating the individual subunits so that they can interact with downstream effector proteins. Post-translationally, myristoylation at Gly-2 is required for membrane anchoring before palmitoylation. Palmitoylation at Cys-3 varies with membrane lipid composition.

Its subcellular location is the nucleus. It is found in the cytoplasm. The protein resides in the cell membrane. The protein localises to the cytoskeleton. It localises to the microtubule organizing center. Its subcellular location is the centrosome. It is found in the cell cortex. The protein resides in the membrane. The catalysed reaction is GTP + H2O = GDP + phosphate + H(+). Its function is as follows. Guanine nucleotide-binding proteins (G proteins) function as transducers downstream of G protein-coupled receptors (GPCRs) in numerous signaling cascades. The alpha chain contains the guanine nucleotide binding site and alternates between an active, GTP-bound state and an inactive, GDP-bound state. Signaling by an activated GPCR promotes GDP release and GTP binding. The alpha subunit has a low GTPase activity that converts bound GTP to GDP, thereby terminating the signal. Both GDP release and GTP hydrolysis are modulated by numerous regulatory proteins. Signaling is mediated via effector proteins, such as adenylate cyclase. Inhibits adenylate cyclase activity, leading to decreased intracellular cAMP levels. Required for cortical dynein-dynactin complex recruitment during metaphase. The sequence is that of Guanine nucleotide-binding protein G(i) subunit alpha-1 (gnai1) from Oryzias latipes (Japanese rice fish).